A 70-amino-acid chain; its full sequence is Large ribosomal subunit protein bL31 (70 aa).

Positions 16, 18, 37, and 40 each coordinate Zn(2+).

Belongs to the bacterial ribosomal protein bL31 family. Type A subfamily. Part of the 50S ribosomal subunit. It depends on Zn(2+) as a cofactor.

Binds the 23S rRNA. The protein is Large ribosomal subunit protein bL31 of Shewanella oneidensis (strain ATCC 700550 / JCM 31522 / CIP 106686 / LMG 19005 / NCIMB 14063 / MR-1).